Here is a 174-residue protein sequence, read N- to C-terminus: Ribosome maturation factor RimM (174 aa).

A PRC barrel domain is found at Glu-96–Leu-169.

It belongs to the RimM family. In terms of assembly, binds ribosomal protein uS19.

Its subcellular location is the cytoplasm. Functionally, an accessory protein needed during the final step in the assembly of 30S ribosomal subunit, possibly for assembly of the head region. Essential for efficient processing of 16S rRNA. May be needed both before and after RbfA during the maturation of 16S rRNA. It has affinity for free ribosomal 30S subunits but not for 70S ribosomes. This Mycobacterium marinum (strain ATCC BAA-535 / M) protein is Ribosome maturation factor RimM.